Consider the following 1119-residue polypeptide: G8 domain-containing protein DDB_G0288475 (1119 aa).

The signal sequence occupies residues 1–22 (MKYSSFLLLFIYIFFILNNINA). The region spanning 276–404 (TIWTSGVVPL…YHNTWTKLAA (129 aa)) is the G8 domain. Asn308, Asn559, Asn736, Asn854, Asn968, Asn1035, Asn1056, and Asn1070 each carry an N-linked (GlcNAc...) asparagine glycan.

This sequence belongs to the comF family.

The protein localises to the secreted. This is G8 domain-containing protein DDB_G0288475 from Dictyostelium discoideum (Social amoeba).